The sequence spans 267 residues: 2-keto-3-deoxy-L-rhamnonate aldolase (267 aa).

Residue histidine 49 is the Proton acceptor of the active site. Glutamine 151 contacts substrate. Residue glutamate 153 coordinates Mg(2+). Positions 178 and 179 each coordinate substrate. Residue aspartate 179 participates in Mg(2+) binding.

Belongs to the HpcH/HpaI aldolase family. KDR aldolase subfamily. Homohexamer. Mg(2+) is required as a cofactor.

It carries out the reaction 2-dehydro-3-deoxy-L-rhamnonate = (S)-lactaldehyde + pyruvate. Functionally, catalyzes the reversible retro-aldol cleavage of 2-keto-3-deoxy-L-rhamnonate (KDR) to pyruvate and lactaldehyde. This is 2-keto-3-deoxy-L-rhamnonate aldolase from Salmonella paratyphi A (strain ATCC 9150 / SARB42).